The sequence spans 2363 residues: MSTETQPEMASTPPEPIAIIGMSCRLSGEASSVDGFWDMLRNGRTGHGRVPSSRYEASAWYHPNQDRKGGINHDSGFFLEEDPSRFDAPFFSITAKEAAGMDPTQRLLLEVAYETFENSGVPMESLPGSRTGVFTGCMTNDYELLSTGDLYNMPHNAATGNARAMLANRLSWFFDLRGPSIMLDTACSSSLTALHLASKSLRDGECEMALVSGASLILHPNFTQRLSSMHMLSPDGISHSFDASANGYGRGEGFAAVLLKPLRTALADNDAIRAIIRATGINQDGRTPGITMPSRQAQAGLIRALYGPGLPSLQETAFFEAHGTGTKVGDPTELSAIGECLMGAETSTNDRLYVGSVKGNIGHTEGAAGVASLIKVVLCLENDMLVPNAGFSKLNSNIHLDKWLLRLSDKTIRWPSHLPRRASINSFGFGGSNAHAIVESASTYLERPAALLSGLDKGEPQIVVFSTHDKTGIDRVAAKWGPFLQAQIDAEQNISFRDIAYTMYARRSQLSFRSFAVAGSLGQLRDALQQGLPHFLRANGTAHANLAFVFTGQGAQWAQMGVELLQVTSFRESITRSEQILSSLGCPWNLFEEIQVEAATSRMNQPDRSQSICCALQIALVNLLASWGVHPKATVGHSSGEIGAAYAAGFITQEDAIRIAYFRGLCSLQVACHGRAGAMLAANLSLPDAQTYLQGVPPRSVVVACVNGPKSVTLSGDADRIDQLEKQLQADGLFARKLRVETAYHSPHMNMVAEGYRHDLQDIQPAKCGESSIAMFSSVTKERVYATDMTADYWVRNLVSPVEFLSAVTSLANMTEASQYRHRAVAVKWSAFLEIGPHEALKGPFLQVLKSINAGLSTVPYHALVRRHADALQTTLNVAGLLWCIGIPIDIEAVNSSINTAVPQLMHNLPSYPWNHQGSFWHEPVASARLRKRREPHHDLLGSPMDFQNDTEPRWRNFLRVSDIPWLADHVVADSILFPAAGMIVMVAEAGRILANTSLRLEGIEFNDLAFLQGLVIPDDDRGVETVLHVAPYHELAEWYEFTLFSLPEDGPWVRHATGTFTLHYDARGVPLNVEEWGLSVERFRKIQTAECETNRDAVYEWLSQTGGVTMGPAFQSVSRAAFCTEENRLWIEGEVTDTRTMMPSEYASPCFIHPTSLDTLFQAAVLSCSDALGNQNAKIPVGVDRLYLSTTWDLQQGDYFSVHTETCLNDGDSRLDSIASDVSWSQPRVVLKGVRLGPVPMSKVPSTSTTAGVDSGTSRFSSIVWAQHLESPTSPALAGHDRDGQLTDWVRDICYTYGNACALVVTQPSWKSPAMTSIQTVRPQLGSRPCLQGLTIVIVGLDKAADEFATAVTRLMPGAQVKQIAALQDFSPSTFNESFFDVVLVDQPCIGNAADADVLLTSLSSTTKQDGVLAVRTYDSQLDPMDYIQRSSEWKVSGRIRDGDFLLAHRQRIPAPLDSTIFVLMPDTEQIPPTFRVALERALSAVGVKLCPVDVEDINGLAGKMVISLLEFRHPWTSKWTSVAMAQFKMLLEARYILWVSPIPILSKDASAASFGASTGLLRTLRNEQPGVTLPQVQYDPDDPNSETSLAQGILQVIQLTLVPVPHRNHDMEYRLQHGRLLVPRVVSEAVVDDKMQTLLHGPRPILARLADDPRALRFHAGSPDGHGGQWVEDRQLVSDVPDDHVEVQLSLRSVVARGSRNFNAHESRLSVVEAVGVIRKLGFAGSTDLSVGDIVVLLVPGAGTVDGMSNRIQVSSKAVAKLPAQLTLAQAVTVPLAYILAYTSLFDIARLGPNCRVLLVGPVGPILRALLSCALEIRGMQVYVATEERAVVEELVAQYAIAPEYVLSIHGGLDGRIADLTEGKGVTAVLSCLGGSSGRLAARCLGSGGHYVDLTGEMNLAALPKAVVSQGCTFTSVNLNSMLQNQSEKVYSSFRRAVATIGLHHQIQPTSIFPISKWAEAESLARQTGISVAIDFTDPGQVPVVPALQEPVNLPPQQTYLLAGGLGMIGLGFAKTLVDSGARHLVILSRSGVLQPSQRIAVASLADQGCHVEIIRCDISQEADLQQVLSQVRSQNWQLKGIIQCATVLKDAAFHTMTFEDWASSTNPKILGTLNLHKVFVDVDLDFFITLSSVSGLIGNIGQANYAAGNVFMDELMIWRRAHGLPGHSIDIGLVPDASGMSDMAETAEVRRSRYSHLEGTEITLRELQMLLRVIILGDIPVPVQIIAGITDDLPREGASSWQYDRKLDHRVRLGHSEPDNMPAQISELLKSSPTIEDASYVVNQALREYLASAMATTADTIDSDLPLSSLGVDSLKVTEVQNWVSRKMGAQLSSFDFLGMQPLRVLSEKIAAQSAFVTVS.

The 427-residue stretch at 14-440 (PEPIAIIGMS…GSNAHAIVES (427 aa)) folds into the Ketosynthase family 3 (KS3) domain. Catalysis depends on for beta-ketoacyl synthase activity residues C187, H322, and H363. Residues 546–854 (LAFVFTGQGA…FLQVLKSINA (309 aa)) are malonyl-CoA:ACP transacylase (MAT) domain. The For malonyltransferase activity role is filled by S638. The N-terminal hotdog fold stretch occupies residues 938–1068 (HDLLGSPMDF…GTFTLHYDAR (131 aa)). The segment at 938-1224 (HDLLGSPMDF…RLDSIASDVS (287 aa)) is dehydratase (DH) domain. Residues 938–1246 (HDLLGSPMDF…LGPVPMSKVP (309 aa)) form the PKS/mFAS DH domain. The active-site Proton acceptor; for dehydratase activity is H970. A C-terminal hotdog fold region spans residues 1089–1246 (TAECETNRDA…LGPVPMSKVP (158 aa)). The Proton donor; for dehydratase activity role is filled by D1159. Residues 1669-1976 (GGQWVEDRQL…ARQTGISVAI (308 aa)) form an enoylreductase (ER) domain region. The catalytic ketoreductase (KRc) domain stretch occupies residues 2001-2177 (TYLLAGGLGM…PGHSIDIGLV (177 aa)). Residues 2279–2357 (EDASYVVNQA…VLSEKIAAQS (79 aa)) form the Carrier domain. An O-(pantetheine 4'-phosphoryl)serine modification is found at S2317.

It functions in the pathway alkaloid biosynthesis. Highly reducing polyketide synthase; part of the gene cluster that mediates the biosynthesis of communesins, a prominent class of indole alkaloids with great potential as pharmaceuticals. Communesins are biosynthesized by the coupling of tryptamine and aurantioclavine, two building blocks derived from L-tryptophan. The L-tryptophan decarboxylase cnsB converts L-tryptophan to tryptamine, whereas the tryptophan dimethylallyltransferase cnsF converts L-tryptophan to 4-dimethylallyl tryptophan which is further transformed to aurantioclavine by the aurantioclavine synthase cnsA, probably aided by the catalase cnsD. The cytochrome P450 monooxygenase cnsC catalyzes the heterodimeric coupling between the two different indole moieties, tryptamine and aurantioclavine, to construct vicinal quaternary stereocenters and yield the heptacyclic communesin scaffold. The O-methyltransferase cnsE then methylates the communesin scaffold to produce communesin K, the simplest characterized communesin that contains the heptacyclic core. The dioxygenase cnsJ converts communesin K into communesin I. Acylation to introduce the hexadienyl group at position N16 of communesin I by the acyltransferase cnsK leads to the production of communesin B. The hexadienyl group is produced by the highly reducing polyketide synthase cnsI, before being hydrolytically removed from cnsI by the serine hydrolase cnsH, converted into hexadienyl-CoA by the CoA ligase cnsG, and then transferred to communesin I by cnsK. Surprisingly, cnsK may also be a promiscuous acyltransferase that can tolerate a range of acyl groups, including acetyl-, propionyl-, and butyryl-CoA, which lead to communesins A, G and H respectively. The roles of the alpha-ketoglutarate-dependent dioxygenases cnsM and cnsP have still to be determined. This Penicillium expansum (Blue mold rot fungus) protein is Highly reducing polyketide synthase cnsI.